The primary structure comprises 1342 residues: ATP-dependent RNA helicase TDRD9 (1342 aa).

A compositionally biased stretch (basic and acidic residues) spans 31–63 (KAEAEDNATEVRSDKAFSELSSPEKEKSDDGNQ). The tract at residues 31 to 81 (KAEAEDNATEVRSDKAFSELSSPEKEKSDDGNQRRKRAQLPTGPGTSPPSL) is disordered. One can recognise a Helicase ATP-binding domain in the interval 99-265 (VSLIENNSVV…FGSPIRNQMN (167 aa)). 112 to 119 (GATGSGKT) lines the ATP pocket. Residues 211 to 214 (DEVH) carry the DEAH box motif. A Helicase C-terminal domain is found at 317–503 (SLIQSFDEME…LLKVKLLDMG (187 aa)). The 62-residue stretch at 901–962 (SLYPNLLCVA…RELPSDLMTP (62 aa)) folds into the Tudor domain.

It belongs to the DEAD box helicase family. DEAH subfamily.

It localises to the cytoplasm. Its subcellular location is the nucleus. The catalysed reaction is ATP + H2O = ADP + phosphate + H(+). ATP-binding RNA helicase which plays a central role during spermatogenesis by repressing transposable elements and preventing their mobilization, which is essential for the germline integrity. Acts via the piRNA metabolic process, which mediates the repression of transposable elements during meiosis by forming complexes composed of piRNAs and Piwi proteins and governs the methylation and subsequent repression of transposons. Acts downstream of piRNA biogenesis: exclusively required for transposon silencing in the nucleus, suggesting that it acts as a nuclear effector in the nucleus together with piwil4. The polypeptide is ATP-dependent RNA helicase TDRD9 (Danio rerio (Zebrafish)).